A 424-amino-acid chain; its full sequence is 3-oxo-tetronate kinase (424 aa).

Residues serine 260, 364–367 (GGET), and glycine 407 each bind ATP.

It belongs to the four-carbon acid sugar kinase family.

It catalyses the reaction 3-dehydro-L-erythronate + ATP = 3-dehydro-4-O-phospho-L-erythronate + ADP + H(+). The enzyme catalyses 3-dehydro-D-erythronate + ATP = 3-dehydro-4-O-phospho-D-erythronate + ADP + H(+). In terms of biological role, catalyzes the ATP-dependent phosphorylation of 3-oxo-tetronate to 3-oxo-tetronate 4-phosphate. This chain is 3-oxo-tetronate kinase, found in Pectobacterium atrosepticum (strain SCRI 1043 / ATCC BAA-672) (Erwinia carotovora subsp. atroseptica).